A 284-amino-acid polypeptide reads, in one-letter code: uncharacterized protein (284 aa).

The first 23 residues, 1 to 23 (MKRGCAIAVMICGLITSVSAASA), serve as a signal peptide directing secretion.

Belongs to the surface antigen msp4 family.

This is an uncharacterized protein from Brucella abortus (strain 2308).